A 103-amino-acid chain; its full sequence is Pro-glucagon (103 aa).

It belongs to the glucagon family.

It localises to the secreted. In terms of biological role, plays a key role in glucose metabolism and homeostasis. Regulates blood glucose by increasing gluconeogenesis and decreasing glycolysis. In Aquarana catesbeiana (American bullfrog), this protein is Pro-glucagon (gcg).